We begin with the raw amino-acid sequence, 680 residues long: MIDRYKHQQLRIGLVSPQQISAWATKIIPNGEIVGEVTKPYTFHYKTNKPEKDGLFCERIFGPIKSGICACGNYRVIGDEKEDPKFCEQCGVEFVDSRIRRYQMGYIKLTCPVTHVWYLKRLPSYIANLLDKPLKELEGLVYCDFSFARPITKKPTFLRLRGSFEYEIQSWKYSIPLFFTTQGFDIFRNREISTGAGAIREQLADLDLRIIIENSLVEWKQLGEEGPTGNEWEDRKIVRRKDFLVRRMELAKHFIRTNIEPEWMVLCLLPVLPPELRPIIQIEGGKLMSSDINELYRRVIYRNNTLTDLLTTSRSTPGELVMCQEKLVQEAVDTLLDNGIRGQPMRDGHNKVYKSFSDVIEGKEGRFRETLLGKRVDYSGRSVIVVGPSLSLHRCGLPREIAIELFQTFVIRGLIRQHLASNIGVAKSQIREKKPIVWEILQEVMQGHPVLLNRAPTLHRLGIQSFQPILVEGRTICLHPLVCKGFNADFDGDQMAVHVPLSLEAQAEARLLMFSHMNLLSPAIGDPISVPTQDMLIGLYVLTSGTRRGICANRYNPCNRKNYQNERISETNYKYTKEPFFCNSYDAIGAYRQKRINLDSPLWLRWQLDQRVIASREVPIEVHYESFGNYHEIYAHYLIVRSVKKETFCIYIRTTVGHISFYREIEEAIQGFSQACSYAT.

Residues Cys69, Cys71, Cys87, and Cys90 each contribute to the Zn(2+) site. Mg(2+) contacts are provided by Asp489, Asp491, and Asp493.

The protein belongs to the RNA polymerase beta' chain family. RpoC1 subfamily. In plastids the minimal PEP RNA polymerase catalytic core is composed of four subunits: alpha, beta, beta', and beta''. When a (nuclear-encoded) sigma factor is associated with the core the holoenzyme is formed, which can initiate transcription. Mg(2+) serves as cofactor. Zn(2+) is required as a cofactor.

The protein resides in the plastid. The protein localises to the chloroplast. The catalysed reaction is RNA(n) + a ribonucleoside 5'-triphosphate = RNA(n+1) + diphosphate. Its function is as follows. DNA-dependent RNA polymerase catalyzes the transcription of DNA into RNA using the four ribonucleoside triphosphates as substrates. The polypeptide is DNA-directed RNA polymerase subunit beta' (Olimarabidopsis pumila (Dwarf rocket)).